The following is a 277-amino-acid chain: 3-methyl-2-oxobutanoate hydroxymethyltransferase (277 aa).

Mg(2+) contacts are provided by Asp53 and Asp96. 3-methyl-2-oxobutanoate is bound by residues 53–54 (DS), Asp96, and Lys126. Residue Glu128 participates in Mg(2+) binding. Residue Glu195 is the Proton acceptor of the active site.

The protein belongs to the PanB family. Homodecamer; pentamer of dimers. Mg(2+) is required as a cofactor.

Its subcellular location is the cytoplasm. The enzyme catalyses 3-methyl-2-oxobutanoate + (6R)-5,10-methylene-5,6,7,8-tetrahydrofolate + H2O = 2-dehydropantoate + (6S)-5,6,7,8-tetrahydrofolate. It functions in the pathway cofactor biosynthesis; (R)-pantothenate biosynthesis; (R)-pantoate from 3-methyl-2-oxobutanoate: step 1/2. In terms of biological role, catalyzes the reversible reaction in which hydroxymethyl group from 5,10-methylenetetrahydrofolate is transferred onto alpha-ketoisovalerate to form ketopantoate. This chain is 3-methyl-2-oxobutanoate hydroxymethyltransferase, found in Prosthecochloris aestuarii (strain DSM 271 / SK 413).